Consider the following 485-residue polypeptide: UDP-N-acetylmuramate--L-alanine ligase (485 aa).

Position 120–126 (120–126 (GSHGKTT)) interacts with ATP.

This sequence belongs to the MurCDEF family.

It is found in the cytoplasm. The enzyme catalyses UDP-N-acetyl-alpha-D-muramate + L-alanine + ATP = UDP-N-acetyl-alpha-D-muramoyl-L-alanine + ADP + phosphate + H(+). Its pathway is cell wall biogenesis; peptidoglycan biosynthesis. In terms of biological role, cell wall formation. The protein is UDP-N-acetylmuramate--L-alanine ligase of Rickettsia rickettsii (strain Iowa).